Here is a 218-residue protein sequence, read N- to C-terminus: UPF0598 protein C8orf82 homolog (218 aa).

It belongs to the UPF0598 family.

The protein is UPF0598 protein C8orf82 homolog of Mus musculus (Mouse).